We begin with the raw amino-acid sequence, 232 residues long: MIKVMVMKIAVIGGTGDQGLGLALRFAVAGEEVIIGSRDAEKASKAASKVLEIAGRDDISVEGATNPDAAASADVVVLTVPLQAQMVTLASIRDQVRDKVLIDATVPIDSCIGGSAVRYIDLWEGSAAERAARFLREQGTRVAAAFNNISASALLEVSEPVDCDCLVASDHRDALEVAAELAEKIDGVRAIECGGLENARIIEKITPLLINLNIRNRVRNAGIRITNLPEQE.

Residues 15 to 18 (TGDQ), 37 to 38 (SR), Lys42, Val80, Val106, and Ala151 contribute to the NADP(+) site.

It belongs to the F420-dependent NADP reductase family. Homotetramer.

It carries out the reaction reduced coenzyme F420-(gamma-L-Glu)(n) + NADP(+) = oxidized coenzyme F420-(gamma-L-Glu)(n) + NADPH + 2 H(+). Catalyzes the reduction of NADP(+) with F420H(2) via hydride transfer, and likely the reverse reaction, i.e. the reduction of F420 with NADPH. Probably functions in the regeneration of NADPH required in biosynthetic reactions. Is specific for reduced F420 as electron donor for the reduction of NADP; neither reduced FAD nor FMN can act as electron donor. The enzyme is also specific for NADP; NAD is not utilized as substrate. The chain is F420-dependent NADP reductase (fno) from Methanothermobacter thermautotrophicus (strain ATCC 29096 / DSM 1053 / JCM 10044 / NBRC 100330 / Delta H) (Methanobacterium thermoautotrophicum).